Here is a 438-residue protein sequence, read N- to C-terminus: Indole diterpene prenyltransferase janD (438 aa).

L-tryptophan is bound at residue 80-81; the sequence is FM. R102, K190, R264, K266, Y268, Y350, Y414, and Y418 together coordinate substrate.

The protein belongs to the tryptophan dimethylallyltransferase family.

It participates in secondary metabolite biosynthesis. In terms of biological role, indole diterpene prenyltransferase; part of the gene cluster that mediates the biosynthesis of the indole diterpenes janthitremanes such as shearinine K or shearinine A. The geranylgeranyl diphosphate (GGPP) synthase janG catalyzes the first step in janthitremane biosynthesis via conversion of farnesyl pyrophosphate and isopentyl pyrophosphate into geranylgeranyl pyrophosphate (GGPP). Condensation of indole-3-glycerol phosphate with GGPP by the prenyl transferase janC then forms 3-geranylgeranylindole (3-GGI). Epoxidation by the FAD-dependent monooxygenase janM leads to a epoxidized-GGI that is substrate of the terpene cyclase janB for cyclization to yield paspaline. Paspaline is subsequently converted to 13-desoxypaspaline by the cytochrome P450 monooxygenase janP, via beta-PC-M6 in a series of alpha-face oxidations. The cytochrome P450 monooxygenase janQ is proposed to carry out sequential beta-face oxidation steps at C-7 and C-13 of 13-desoxypaspaline to form paspalicine and paspalinine respectively. The indole diterpene prenyltransferase janD may then convert paspalinine into shearinine K which is substrate of janO and/or additional enzymes for oxidation and cyclization to generate shearinine A. The sequence is that of Indole diterpene prenyltransferase janD from Penicillium janthinellum (Penicillium vitale).